We begin with the raw amino-acid sequence, 199 residues long: MAEAPGDIERLIELMARLPGLGPRSARRAVLVMLKKRGAVMAPLAQAMAEVAATARDCARCGNITSADLCDICRDDRRATGELCVVEDVADLWALERAGVFRGRYHVLGGVLSALDSVGPDELRIPRLAERVRDEGISEVILALNATVDGQTTAHYIADVLEPSGVQVTSLAQGVPIGGELDYLDDGTIGAALRARRRF.

The C4-type zinc finger occupies 58 to 73 (CARCGNITSADLCDIC). One can recognise a Toprim domain in the interval 81–176 (GELCVVEDVA…QVTSLAQGVP (96 aa)).

It belongs to the RecR family.

Its function is as follows. May play a role in DNA repair. It seems to be involved in an RecBC-independent recombinational process of DNA repair. It may act with RecF and RecO. This Cereibacter sphaeroides (strain ATCC 17025 / ATH 2.4.3) (Rhodobacter sphaeroides) protein is Recombination protein RecR.